Reading from the N-terminus, the 686-residue chain is DNA ligase (686 aa).

Residues 33–37 (DSVYD), 82–83 (SL), and E122 each bind NAD(+). K124 acts as the N6-AMP-lysine intermediate in catalysis. 4 residues coordinate NAD(+): R145, E182, K300, and K324. Positions 418, 421, 436, and 441 each coordinate Zn(2+). In terms of domain architecture, BRCT spans 600–686 (AVSQILAGKK…PTVESGDLHP (87 aa)).

It belongs to the NAD-dependent DNA ligase family. LigA subfamily. Mg(2+) serves as cofactor. Mn(2+) is required as a cofactor.

The enzyme catalyses NAD(+) + (deoxyribonucleotide)n-3'-hydroxyl + 5'-phospho-(deoxyribonucleotide)m = (deoxyribonucleotide)n+m + AMP + beta-nicotinamide D-nucleotide.. Functionally, DNA ligase that catalyzes the formation of phosphodiester linkages between 5'-phosphoryl and 3'-hydroxyl groups in double-stranded DNA using NAD as a coenzyme and as the energy source for the reaction. It is essential for DNA replication and repair of damaged DNA. The sequence is that of DNA ligase from Synechococcus sp. (strain JA-2-3B'a(2-13)) (Cyanobacteria bacterium Yellowstone B-Prime).